The chain runs to 152 residues: Ribosome maturation factor RimP (152 aa).

This sequence belongs to the RimP family.

The protein resides in the cytoplasm. Required for maturation of 30S ribosomal subunits. The polypeptide is Ribosome maturation factor RimP (Porphyromonas gingivalis (strain ATCC 33277 / DSM 20709 / CIP 103683 / JCM 12257 / NCTC 11834 / 2561)).